Consider the following 465-residue polypeptide: Probable multidrug resistance protein NorM (465 aa).

Helical transmembrane passes span 50 to 72 (MAAISVGASIWMPLVLFGQGLLL), 92 to 114 (HQVRQGIWIILFSIVPLALLIYH), 127 to 149 (HLAQITIKYLHAMLFGLPAYLLL), 164 to 186 (PAMIITLIGLLLNIPLNYIFIYG), 193 to 215 (FGAVGCGIATTIVNWIMCILMIS), 248 to 270 (GLPIAIAICSEVALFALTSLLLS), 283 to 305 (ALNTSSFIFMLPMSLGMATTILV), 320 to 342 (ISYVALFIGLATATLTAFLTVVL), 393 to 412 (ILYITLFCYWVLGMPIGYIL), and 422 to 444 (MGPTGFWIAFVVSLTVAAVLLFY).

It belongs to the multi antimicrobial extrusion (MATE) (TC 2.A.66.1) family.

Its subcellular location is the cell inner membrane. Multidrug efflux pump. This chain is Probable multidrug resistance protein NorM (norM), found in Mannheimia succiniciproducens (strain KCTC 0769BP / MBEL55E).